A 380-amino-acid polypeptide reads, in one-letter code: 3-isopropylmalate dehydrogenase (380 aa).

Residue 79-90 participates in NAD(+) binding; sequence GPEWAGVHPTPE. The substrate site is built by Arg97, Arg107, Arg136, and Asp229. Positions 229, 254, and 258 each coordinate Mg(2+). 294-306 contributes to the NAD(+) binding site; that stretch reads GSAPDISGKGLAN.

The protein belongs to the isocitrate and isopropylmalate dehydrogenases family. Homodimer. Requires Mg(2+) as cofactor. It depends on Mn(2+) as a cofactor.

The protein resides in the cytoplasm. It catalyses the reaction (2R,3S)-3-isopropylmalate + NAD(+) = 4-methyl-2-oxopentanoate + CO2 + NADH. The protein operates within amino-acid biosynthesis; L-leucine biosynthesis; L-leucine from 3-methyl-2-oxobutanoate: step 3/4. Catalyzes the oxidation of 3-carboxy-2-hydroxy-4-methylpentanoate (3-isopropylmalate) to 3-carboxy-4-methyl-2-oxopentanoate. The product decarboxylates to 4-methyl-2 oxopentanoate. This Hapsidospora chrysogena (Acremonium chrysogenum) protein is 3-isopropylmalate dehydrogenase (LEU2).